The sequence spans 252 residues: 5'-nucleotidase SurE (252 aa).

Positions 8, 9, 39, and 91 each coordinate a divalent metal cation.

The protein belongs to the SurE nucleotidase family. Requires a divalent metal cation as cofactor.

Its subcellular location is the cytoplasm. The enzyme catalyses a ribonucleoside 5'-phosphate + H2O = a ribonucleoside + phosphate. Its function is as follows. Nucleotidase that shows phosphatase activity on nucleoside 5'-monophosphates. The polypeptide is 5'-nucleotidase SurE (Legionella pneumophila (strain Lens)).